We begin with the raw amino-acid sequence, 175 residues long: Co-chaperone protein HscB homolog (175 aa).

Residues 2–74 (NYFQLFNIEV…LQRAEYILVQ (73 aa)) enclose the J domain.

Belongs to the HscB family. In terms of assembly, interacts with HscA and stimulates its ATPase activity.

Functionally, co-chaperone involved in the maturation of iron-sulfur cluster-containing proteins. Seems to help targeting proteins to be folded toward HscA. This chain is Co-chaperone protein HscB homolog, found in Colwellia psychrerythraea (strain 34H / ATCC BAA-681) (Vibrio psychroerythus).